Here is a 109-residue protein sequence, read N- to C-terminus: Small ribosomal subunit protein bS16 (109 aa).

The tract at residues 87–109 (ALRETPKKSAPKAKAQERAKAAG) is disordered. Residues 100–109 (KAQERAKAAG) show a composition bias toward basic and acidic residues.

The protein belongs to the bacterial ribosomal protein bS16 family.

In Rhodospirillum centenum (strain ATCC 51521 / SW), this protein is Small ribosomal subunit protein bS16.